The following is a 145-amino-acid chain: MTEYTLKIKLLKEDAKLPQYAHDNDAGMDLFSTEDKIINPGKHALILTGISIELPENTEAQIRPRSGLALKNGVTVLNTPGTIDAGYRGEIGIILINHGEKNFQVEKGMKIAQMVIKPIVKVNIEEVKMLSESQRGKGGFGSTGK.

Substrate is bound by residues 65-67 (RSG), Asn-78, and 82-84 (TID).

It belongs to the dUTPase family. The cofactor is Mg(2+).

It carries out the reaction dUTP + H2O = dUMP + diphosphate + H(+). It functions in the pathway pyrimidine metabolism; dUMP biosynthesis; dUMP from dCTP (dUTP route): step 2/2. Functionally, this enzyme is involved in nucleotide metabolism: it produces dUMP, the immediate precursor of thymidine nucleotides and it decreases the intracellular concentration of dUTP so that uracil cannot be incorporated into DNA. The chain is Deoxyuridine 5'-triphosphate nucleotidohydrolase from Clostridium tetani (strain Massachusetts / E88).